Consider the following 340-residue polypeptide: Glycerol-3-phosphate dehydrogenase [NAD(P)+] (340 aa).

NADPH contacts are provided by S14, Y15, H35, and K109. 3 residues coordinate sn-glycerol 3-phosphate: K109, G138, and T140. A142 contacts NADPH. Sn-glycerol 3-phosphate is bound by residues K194, D247, S257, R258, and N259. The active-site Proton acceptor is the K194. R258 lines the NADPH pocket. NADPH is bound by residues V282 and E284.

The protein belongs to the NAD-dependent glycerol-3-phosphate dehydrogenase family.

The protein localises to the cytoplasm. It carries out the reaction sn-glycerol 3-phosphate + NAD(+) = dihydroxyacetone phosphate + NADH + H(+). The catalysed reaction is sn-glycerol 3-phosphate + NADP(+) = dihydroxyacetone phosphate + NADPH + H(+). Its pathway is membrane lipid metabolism; glycerophospholipid metabolism. Catalyzes the reduction of the glycolytic intermediate dihydroxyacetone phosphate (DHAP) to sn-glycerol 3-phosphate (G3P), the key precursor for phospholipid synthesis. This Photorhabdus laumondii subsp. laumondii (strain DSM 15139 / CIP 105565 / TT01) (Photorhabdus luminescens subsp. laumondii) protein is Glycerol-3-phosphate dehydrogenase [NAD(P)+].